A 34-amino-acid polypeptide reads, in one-letter code: uncharacterized protein (34 aa).

This is an uncharacterized protein from Saccharomyces cerevisiae (strain ATCC 204508 / S288c) (Baker's yeast).